Reading from the N-terminus, the 367-residue chain is Small ribosomal subunit biogenesis GTPase RsgA (367 aa).

A CP-type G domain is found at 112-267 (AEQVLATNVD…VIDTPGLREL (156 aa)). GTP-binding positions include 157-160 (NKSD) and 209-217 (GSSGAGKST). 4 residues coordinate Zn(2+): cysteine 291, cysteine 296, histidine 298, and cysteine 304.

It belongs to the TRAFAC class YlqF/YawG GTPase family. RsgA subfamily. In terms of assembly, monomer. Associates with 30S ribosomal subunit, binds 16S rRNA. Zn(2+) serves as cofactor.

It is found in the cytoplasm. One of several proteins that assist in the late maturation steps of the functional core of the 30S ribosomal subunit. Helps release RbfA from mature subunits. May play a role in the assembly of ribosomal proteins into the subunit. Circularly permuted GTPase that catalyzes slow GTP hydrolysis, GTPase activity is stimulated by the 30S ribosomal subunit. The sequence is that of Small ribosomal subunit biogenesis GTPase RsgA from Opitutus terrae (strain DSM 11246 / JCM 15787 / PB90-1).